The following is a 365-amino-acid chain: NAD(P)H-quinone oxidoreductase subunit 1, chloroplastic (365 aa).

6 helical membrane-spanning segments follow: residues 30-50, 104-124, 129-149, 253-273, 302-322, and 338-358; these read LVPILTLVLGITIGILVIVWL, IAVISTLLSYSVIPFGYHFVL, IGVFLWIAISSIAPIGLLMSG, FGLFYVASYLNLLVSSLFVAV, VFGTTMGILITLVKTYLFLFI, and LLNLGWKFLLPISLGNLLLTT.

The protein belongs to the complex I subunit 1 family. As to quaternary structure, NDH is composed of at least 16 different subunits, 5 of which are encoded in the nucleus.

It is found in the plastid. The protein resides in the chloroplast thylakoid membrane. It carries out the reaction a plastoquinone + NADH + (n+1) H(+)(in) = a plastoquinol + NAD(+) + n H(+)(out). The catalysed reaction is a plastoquinone + NADPH + (n+1) H(+)(in) = a plastoquinol + NADP(+) + n H(+)(out). NDH shuttles electrons from NAD(P)H:plastoquinone, via FMN and iron-sulfur (Fe-S) centers, to quinones in the photosynthetic chain and possibly in a chloroplast respiratory chain. The immediate electron acceptor for the enzyme in this species is believed to be plastoquinone. Couples the redox reaction to proton translocation, and thus conserves the redox energy in a proton gradient. The polypeptide is NAD(P)H-quinone oxidoreductase subunit 1, chloroplastic (Populus trichocarpa (Western balsam poplar)).